Reading from the N-terminus, the 351-residue chain is Ion-translocating oxidoreductase complex subunit D (351 aa).

Helical transmembrane passes span 18–38, 42–62, 87–107, and 121–141; these read IMLLVILACIPGIIAQTYFFG, LIQVALAIMTAVLAEGAVLHL, LPPLAPWWMIVLGTAFAIIIA, and PAMVGYVVLLISFPVQMTSWL. Thr185 carries the post-translational modification FMN phosphoryl threonine. Helical transmembrane passes span 212-232, 241-261, 264-284, 298-318, and 320-340; these read LAGIGWQWINLGFLAGGLLLL, IPVSFLLALAGCAAISWMIAP, FAPPMLHLFSGATMLGAFFIA, LIFGALIGILVWLIRVYGGYP, and GVAFAVLLANICVPLIDHYTQ.

Belongs to the NqrB/RnfD family. The complex is composed of six subunits: RnfA, RnfB, RnfC, RnfD, RnfE and RnfG. Requires FMN as cofactor.

The protein resides in the cell inner membrane. In terms of biological role, part of a membrane-bound complex that couples electron transfer with translocation of ions across the membrane. The protein is Ion-translocating oxidoreductase complex subunit D of Yersinia enterocolitica serotype O:8 / biotype 1B (strain NCTC 13174 / 8081).